The following is a 208-amino-acid chain: Large ribosomal subunit protein uL3 (208 aa).

Residues 134–159 form a disordered region; it reads SKFHREAGSTGHCTTPGRSFKNTTMP. The span at 144–158 shows a compositional bias: polar residues; sequence GHCTTPGRSFKNTTM.

The protein belongs to the universal ribosomal protein uL3 family. As to quaternary structure, part of the 50S ribosomal subunit. Forms a cluster with proteins L14 and L19.

Its function is as follows. One of the primary rRNA binding proteins, it binds directly near the 3'-end of the 23S rRNA, where it nucleates assembly of the 50S subunit. This is Large ribosomal subunit protein uL3 from Treponema denticola (strain ATCC 35405 / DSM 14222 / CIP 103919 / JCM 8153 / KCTC 15104).